Here is a 391-residue protein sequence, read N- to C-terminus: Succinate--CoA ligase [ADP-forming] subunit beta (391 aa).

In terms of domain architecture, ATP-grasp spans 9 to 248 (KDILRKFGVA…ISEEDPFEVE (240 aa)). ATP contacts are provided by residues Lys-50, 57-59 (GRG), Glu-103, Met-106, and Glu-111. Positions 203 and 217 each coordinate Mg(2+). Substrate-binding positions include Asn-268 and 325-327 (GIV).

This sequence belongs to the succinate/malate CoA ligase beta subunit family. Heterotetramer of two alpha and two beta subunits. The cofactor is Mg(2+).

The enzyme catalyses succinate + ATP + CoA = succinyl-CoA + ADP + phosphate. The catalysed reaction is GTP + succinate + CoA = succinyl-CoA + GDP + phosphate. It functions in the pathway carbohydrate metabolism; tricarboxylic acid cycle; succinate from succinyl-CoA (ligase route): step 1/1. Its function is as follows. Succinyl-CoA synthetase functions in the citric acid cycle (TCA), coupling the hydrolysis of succinyl-CoA to the synthesis of either ATP or GTP and thus represents the only step of substrate-level phosphorylation in the TCA. The beta subunit provides nucleotide specificity of the enzyme and binds the substrate succinate, while the binding sites for coenzyme A and phosphate are found in the alpha subunit. The polypeptide is Succinate--CoA ligase [ADP-forming] subunit beta (Chlorobium luteolum (strain DSM 273 / BCRC 81028 / 2530) (Pelodictyon luteolum)).